We begin with the raw amino-acid sequence, 145 residues long: Protein SprT-like (145 aa).

Residues 4 to 141 (TDYVKEVSRQ…CGNCHGKLRH (138 aa)) form the SprT-like domain. H64 serves as a coordination point for Zn(2+). E65 is an active-site residue. H68 is a Zn(2+) binding site.

This sequence belongs to the SprT family. It depends on Zn(2+) as a cofactor.

Its subcellular location is the cytoplasm. The chain is Protein SprT-like from Streptococcus mutans serotype c (strain ATCC 700610 / UA159).